Consider the following 89-residue polypeptide: Large ribosomal subunit protein bL31B (89 aa).

Belongs to the bacterial ribosomal protein bL31 family. Type B subfamily. As to quaternary structure, part of the 50S ribosomal subunit.

This is Large ribosomal subunit protein bL31B from Enterococcus faecalis (strain ATCC 700802 / V583).